Consider the following 124-residue polypeptide: Large ribosomal subunit protein mL51 (124 aa).

Residues 1–31 constitute a mitochondrion transit peptide; the sequence is MSVFGGLWRSAVNLCQSSRLFSTGSCARIRM.

It belongs to the mitochondrion-specific ribosomal protein mL51 family. As to quaternary structure, component of the mitochondrial ribosome large subunit (39S) which comprises a 16S rRNA and about 50 distinct proteins.

The protein resides in the mitochondrion. This is Large ribosomal subunit protein mL51 (mrpl51) from Danio rerio (Zebrafish).